We begin with the raw amino-acid sequence, 124 residues long: Ribulose bisphosphate carboxylase small subunit (124 aa).

The protein belongs to the RuBisCO small chain family. In terms of assembly, heterohexadecamer of 8 large and 8 small subunits.

Its function is as follows. RuBisCO catalyzes two reactions: the carboxylation of D-ribulose 1,5-bisphosphate, the primary event in carbon dioxide fixation, as well as the oxidative fragmentation of the pentose substrate. Both reactions occur simultaneously and in competition at the same active site. Although the small subunit is not catalytic it is essential for maximal activity. This Hydrogenophilus thermoluteolus (Pseudomonas hydrogenothermophila) protein is Ribulose bisphosphate carboxylase small subunit.